Reading from the N-terminus, the 493-residue chain is Chitinase 1 (493 aa).

The signal sequence occupies residues 1-20 (MISCNILGITIAAFITSTLA). The 292-residue stretch at 27 to 318 (VNVMYYWGQN…HGSSAALGQA (292 aa)) folds into the GH18 domain. The active-site Proton donor is glutamate 164.

Belongs to the glycosyl hydrolase 18 family. Chitinase class III subfamily.

It catalyses the reaction Random endo-hydrolysis of N-acetyl-beta-D-glucosaminide (1-&gt;4)-beta-linkages in chitin and chitodextrins.. The chain is Chitinase 1 (CHI1) from Rhizopus niveus.